The sequence spans 101 residues: Small ribosomal subunit protein uS14 (101 aa).

The interval 51–72 (LPRDSSPSRQRNPCRQTGRPHG) is disordered. Positions 52 to 65 (PRDSSPSRQRNPCR) are enriched in polar residues.

The protein belongs to the universal ribosomal protein uS14 family. Part of the 30S ribosomal subunit. Contacts proteins S3 and S10.

Binds 16S rRNA, required for the assembly of 30S particles and may also be responsible for determining the conformation of the 16S rRNA at the A site. This is Small ribosomal subunit protein uS14 from Buchnera aphidicola subsp. Acyrthosiphon kondoi (Acyrthosiphon kondoi symbiotic bacterium).